Here is a 900-residue protein sequence, read N- to C-terminus: Trehalose-phosphatase (900 aa).

Disordered regions lie at residues 76 to 109 and 874 to 900; these read SRLFNSKNRDKSENGEKGENDLHAKEEREKEEDP and VKHSDSSIRSEQASARYAMKRQQSYKN. The segment covering 82–108 has biased composition (basic and acidic residues); that stretch reads KNRDKSENGEKGENDLHAKEEREKEED.

This sequence in the C-terminal section; belongs to the trehalose phosphatase family. In the N-terminal section; belongs to the glycosyltransferase 20 family. The cofactor is Mg(2+).

It catalyses the reaction alpha,alpha-trehalose 6-phosphate + H2O = alpha,alpha-trehalose + phosphate. Its pathway is carbohydrate biosynthesis. Its function is as follows. Phosphatase catalytic subunit of the trehalose synthase complex that catalyzes the production of trehalose from glucose-6-phosphate and UDP-alpha-D-glucose in a two step process. This Zygosaccharomyces rouxii protein is Trehalose-phosphatase.